Consider the following 469-residue polypeptide: Adenosylhomocysteinase (469 aa).

3 residues coordinate substrate: Thr-63, Asp-139, and Glu-164. Residue 165–167 (TTT) participates in NAD(+) binding. Substrate is bound by residues Lys-194 and Asp-198. NAD(+) contacts are provided by residues Asn-199, 228-233 (GYGDVG), Glu-251, Asn-300, 321-323 (IGH), and Asn-375.

It belongs to the adenosylhomocysteinase family. NAD(+) serves as cofactor.

It is found in the cytoplasm. It catalyses the reaction S-adenosyl-L-homocysteine + H2O = L-homocysteine + adenosine. It participates in amino-acid biosynthesis; L-homocysteine biosynthesis; L-homocysteine from S-adenosyl-L-homocysteine: step 1/1. In terms of biological role, may play a key role in the regulation of the intracellular concentration of adenosylhomocysteine. The sequence is that of Adenosylhomocysteinase from Pseudomonas aeruginosa (strain UCBPP-PA14).